Reading from the N-terminus, the 664-residue chain is 1,4-alpha-glucan branching enzyme GlgB 2 (664 aa).

Positions 1–17 (MGGKEMRNCKELKHEKN) are enriched in basic and acidic residues. Residues 1 to 31 (MGGKEMRNCKELKHEKNGNVTEKVGKNKGKS) are disordered. D342 acts as the Nucleophile in catalysis. The active-site Proton donor is E395.

Belongs to the glycosyl hydrolase 13 family. GlgB subfamily. In terms of assembly, monomer.

It catalyses the reaction Transfers a segment of a (1-&gt;4)-alpha-D-glucan chain to a primary hydroxy group in a similar glucan chain.. Its pathway is glycan biosynthesis; glycogen biosynthesis. Functionally, catalyzes the formation of the alpha-1,6-glucosidic linkages in glycogen by scission of a 1,4-alpha-linked oligosaccharide from growing alpha-1,4-glucan chains and the subsequent attachment of the oligosaccharide to the alpha-1,6 position. The polypeptide is 1,4-alpha-glucan branching enzyme GlgB 2 (glgB2) (Clostridium perfringens (strain 13 / Type A)).